Reading from the N-terminus, the 1447-residue chain is Calcium-dependent secretion activator (1447 aa).

A compositionally biased stretch (acidic residues) spans 1-15 (MIDPSSSEEEGEDDA). Disordered stretches follow at residues 1-35 (MIDP…TSAV) and 101-163 (DTGN…EEEE). 2 stretches are compositionally biased toward polar residues: residues 18–32 (NVSS…TKGT) and 111–126 (GIPS…QSVG). Over residues 127-144 (SSRANSLPRPLSPSPSLT) the composition is skewed to low complexity. Residues 145 to 163 (SEKHETAEPHGKHEREEEE) are compositionally biased toward basic and acidic residues. The C2 domain occupies 417 to 547 (SKYGLQKLKR…PLSSKSPEWH (131 aa)). One can recognise a PH domain in the interval 573-683 (NMKHCGYLYA…WVMAMYRATG (111 aa)). In terms of domain architecture, MHD1 spans 970–1157 (VDMDRVLSEQ…DMIEQCIQRT (188 aa)). The span at 1386–1395 (REGEEEDNGD) shows a compositional bias: acidic residues. Residues 1386–1406 (REGEEEDNGDESTSNIPRGLP) form a disordered region.

Restricted to the nervous system at all stages of development and highly localized at synapses (at protein level).

It is found in the cytoplasmic vesicle membrane. The protein resides in the synapse. In terms of biological role, calcium-binding protein involved in exocytosis of vesicles filled with neurotransmitters and neuropeptides. May specifically mediate the Ca(2+)-dependent exocytosis of large dense-core vesicles (DCVs) and other dense-core vesicles. However, it probably also participates in small clear synaptic vesicles (SVs) exocytosis and it is unclear whether its function is related to Ca(2+) triggering. This is Calcium-dependent secretion activator from Drosophila melanogaster (Fruit fly).